The chain runs to 317 residues: MDFEASARDLTTPVKGAKIVPNMSVDELVREYAGCAFGAGRLAEAVDIYYEMLASEKTTKFFGLAGAMTPAGMRGIIADLIRDGHIDVLVTTGANMVHDTVEALGLHHYKGSDCANDIQLRHECIDRIYDVYLPDQHFTDLEEFLQSVYAGLPQEKLSIRQVLTEIGKNLDDDSSILKTAAEMGVPVYCPALQDSVIGLQAWLYKEGNLLHVDAFADMHEFMEICYEAESAGAMLLGGGVPKNYILQSMLVTPKSFDYAIQLTMDRPETGGLSGATLDEAQSWGKVGEDAKSVTVYADATITLPLIVSAVRTRLSKR.

Lys285 (nucleophile) is an active-site residue.

It belongs to the deoxyhypusine synthase family. The cofactor is NAD(+).

It catalyses the reaction [eIF5A protein]-L-lysine + spermidine = [eIF5A protein]-deoxyhypusine + propane-1,3-diamine. The protein operates within protein modification; eIF5A hypusination. Its function is as follows. Catalyzes the NAD-dependent oxidative cleavage of spermidine and the subsequent transfer of the butylamine moiety of spermidine to the epsilon-amino group of a specific lysine residue of the eIF-5A precursor protein to form the intermediate deoxyhypusine residue. The polypeptide is Probable deoxyhypusine synthase 1 (dys1) (Methanosarcina acetivorans (strain ATCC 35395 / DSM 2834 / JCM 12185 / C2A)).